A 458-amino-acid chain; its full sequence is tRNA modification GTPase MnmE (458 aa).

The (6S)-5-formyl-5,6,7,8-tetrahydrofolate site is built by Arg22, Glu86, and Arg125. The TrmE-type G domain maps to Gly221 to Phe379. Asn231 provides a ligand contact to K(+). Residues Asn231–Ser236, Thr250–Thr256, and Asp275–Gly278 each bind GTP. Ser235 serves as a coordination point for Mg(2+). K(+) is bound by residues Thr250, Ile252, and Thr255. Thr256 contacts Mg(2+). A (6S)-5-formyl-5,6,7,8-tetrahydrofolate-binding site is contributed by Lys458.

The protein belongs to the TRAFAC class TrmE-Era-EngA-EngB-Septin-like GTPase superfamily. TrmE GTPase family. Homodimer. Heterotetramer of two MnmE and two MnmG subunits. It depends on K(+) as a cofactor.

It is found in the cytoplasm. Its function is as follows. Exhibits a very high intrinsic GTPase hydrolysis rate. Involved in the addition of a carboxymethylaminomethyl (cmnm) group at the wobble position (U34) of certain tRNAs, forming tRNA-cmnm(5)s(2)U34. The chain is tRNA modification GTPase MnmE from Lachnoclostridium phytofermentans (strain ATCC 700394 / DSM 18823 / ISDg) (Clostridium phytofermentans).